A 208-amino-acid chain; its full sequence is uncharacterized protein (208 aa).

The disordered stretch occupies residues 124-208 (KKTGSSNART…PSFGKYSSLA (85 aa)). Residues 133-170 (TPDEGKKAKNAPEEEKVKTSGSEDAKGEESAVEGKEPE) are compositionally biased toward basic and acidic residues.

It is found in the golgi apparatus. This is an uncharacterized protein from Encephalitozoon cuniculi (strain GB-M1) (Microsporidian parasite).